The sequence spans 301 residues: Thioredoxin-related transmembrane protein 2-A (301 aa).

An N-terminal signal peptide occupies residues 1–19; the sequence is MSLIRGLISTIYYLPKIYK. The Extracellular portion of the chain corresponds to 20-111; it reads WFYRPYYFLS…VVLFFRVDLR (92 aa). The helical transmembrane segment at 112–132 threads the bilayer; that stretch reads FGLLYLTLCVVFLITCKPPAY. Positions 122–269 constitute a Thioredoxin domain; that stretch reads VFLITCKPPA…IFQKYKKFSK (148 aa). Topologically, residues 133-301 are cytoplasmic; sequence MGPENIKYFR…EEDSESKKDK (169 aa). The disordered stretch occupies residues 268–301; that stretch reads SKGEKPEEPQPVLEEESESPLEEEEEDSESKKDK. Acidic residues predominate over residues 280 to 295; the sequence is LEEESESPLEEEEEDS. Positions 298–301 match the Di-lysine motif motif; that stretch reads KKDK.

In terms of assembly, monomer. Homodimer; disulfide-linked. Occurs in both reduced and oxidized monomeric form. Oxidative conditions increase homodimerization.

The protein resides in the endoplasmic reticulum membrane. The protein localises to the mitochondrion membrane. Its function is as follows. Endoplasmic reticulum and mitochondria-associated protein that probably functions as a regulator of cellular redox state and thereby regulates protein post-translational modification, protein folding and mitochondrial activity. In Danio rerio (Zebrafish), this protein is Thioredoxin-related transmembrane protein 2-A.